Consider the following 515-residue polypeptide: Probable coatomer subunit delta (515 aa).

Over residues 161–180 (AKQAMAEKAKELKRAQKEAL) the composition is skewed to basic and acidic residues. The disordered stretch occupies residues 161 to 231 (AKQAMAEKAK…GGKALKLGGK (71 aa)). Low complexity predominate over residues 187–198 (SYQSSTGISSSS). The MHD domain occupies 276–515 (REVVHVRTEE…TFNSENFEIV (240 aa)).

Belongs to the adaptor complexes medium subunit family. Delta-COP subfamily. As to quaternary structure, oligomeric complex that consists of at least the alpha, beta, beta', gamma, delta, epsilon and zeta subunits.

The protein resides in the cytoplasm. It localises to the golgi apparatus membrane. Its subcellular location is the cytoplasmic vesicle. The protein localises to the COPI-coated vesicle membrane. Its function is as follows. The coatomer is a cytosolic protein complex that binds to dilysine motifs and reversibly associates with Golgi non-clathrin-coated vesicles, which further mediate biosynthetic protein transport from the ER, via the Golgi up to the trans Golgi network. Coatomer complex is required for budding from Golgi membranes, and is essential for the retrograde Golgi-to-ER transport of dilysine-tagged proteins. The sequence is that of Probable coatomer subunit delta from Caenorhabditis elegans.